The primary structure comprises 364 residues: MITAEKKKKNKFLPNFDKQSIYSLRFDEMQNWLVEQGQQKFRAKQIFEWLYQKRVDSIDEMTNLSKDLRQLLKDNFTVTTLTTVVKQESKDGTIKFLFELQDGYTIETVLMRHDYGNSVCVTTQVGCRIGCTFCASTLGGLKRNLEAGEIVSQVLTVQKALDATEERVSQIVIMGIGEPFENYDEMMGFLRIVNDDNSLNIGARHITVSTSGIIPRIYDFADEDIQINFAVSLHAAKDEVRSRLMPINRAYNVEKLIEAIQYYQEKTNRRVTFEYGLFGGVNDQLEHARELAHLIKGLNCHVNLIPVNHVPERNYVKTAKNDIFKFEKELKRLGINATIRREQGSDIDAACGQLRAKERQVETR.

The active-site Proton acceptor is E107. Residues 113 to 346 (HDYGNSVCVT…ATIRREQGSD (234 aa)) form the Radical SAM core domain. A disulfide bridge connects residues C120 and C351. [4Fe-4S] cluster contacts are provided by C127, C131, and C134. S-adenosyl-L-methionine is bound by residues 177-178 (GE), S209, 232-234 (SLH), and N308. The active-site S-methylcysteine intermediate is the C351.

This sequence belongs to the radical SAM superfamily. RlmN family. [4Fe-4S] cluster serves as cofactor.

The protein localises to the cytoplasm. The enzyme catalyses adenosine(2503) in 23S rRNA + 2 reduced [2Fe-2S]-[ferredoxin] + 2 S-adenosyl-L-methionine = 2-methyladenosine(2503) in 23S rRNA + 5'-deoxyadenosine + L-methionine + 2 oxidized [2Fe-2S]-[ferredoxin] + S-adenosyl-L-homocysteine. The catalysed reaction is adenosine(37) in tRNA + 2 reduced [2Fe-2S]-[ferredoxin] + 2 S-adenosyl-L-methionine = 2-methyladenosine(37) in tRNA + 5'-deoxyadenosine + L-methionine + 2 oxidized [2Fe-2S]-[ferredoxin] + S-adenosyl-L-homocysteine. In terms of biological role, specifically methylates position 2 of adenine 2503 in 23S rRNA and position 2 of adenine 37 in tRNAs. Confers resistance to some classes of antibiotics. The sequence is that of Probable dual-specificity RNA methyltransferase RlmN from Staphylococcus aureus (strain bovine RF122 / ET3-1).